The chain runs to 2671 residues: Inositol 1,4,5-trisphosphate-gated calcium channel ITPR3 (2671 aa).

Residues 1 to 2202 (MSEMSSFLHI…LIYWFSRRMT (2202 aa)) lie on the Cytoplasmic side of the membrane. MIR domains follow at residues 113–173 (GDVV…LRSN), 174–224 (GDNV…INLF), 232–288 (EEVL…VEVV), 295–372 (GGAG…LDPT), and 378–434 (DSFV…IVSV). Positions 266, 268, 269, and 270 each coordinate 1D-myo-inositol 1,4,5-trisphosphate. The segment at 322–342 (SYKGDASDPKAAGMGAQGRTG) is disordered. Residues arginine 503, lysine 507, arginine 510, tyrosine 567, arginine 568, and lysine 569 each contribute to the 1D-myo-inositol 1,4,5-trisphosphate site. Residue arginine 743 coordinates Ca(2+). Residues serine 916 and serine 934 each carry the phosphoserine modification. Ca(2+)-binding residues include glutamate 1122 and glutamate 1125. Disordered stretches follow at residues 1132–1163 (GSGK…PPGE) and 1809–1848 (NDLG…GPSL). 3 positions are modified to phosphoserine: serine 1813, serine 1832, and serine 1834. Ca(2+)-binding residues include glutamate 1882 and glutamate 1946. ATP contacts are provided by alanine 1996, glutamate 2149, and lysine 2152. A helical membrane pass occupies residues 2203–2223 (LWGSISFNLAVFINIIIAFFY). Over 2224-2235 (PYMEGASTGVLD) the chain is Extracellular. A helical transmembrane segment spans residues 2236–2256 (SPLISLLFWILICFSIAALFT). Residues 2257–2264 (KRYSIRPL) lie on the Cytoplasmic side of the membrane. The chain crosses the membrane as a helical span at residues 2265–2285 (IVALILRSIYYLGIGPTLNIL). Residues 2286–2325 (GALNLTNKIVFVVSFVGNRGTFIRGYKAMVMDMEFLYHVG) lie on the Extracellular side of the membrane. Residues 2326–2346 (YILTSVLGLFAHELFYSILLF) form a helical membrane-spanning segment. Residues 2347-2368 (DLIYREETLFNVIKSVTRNGRS) are Cytoplasmic-facing. Residues 2369 to 2389 (ILLTALLALILVYLFSIVGFL) traverse the membrane as a helical segment. Topologically, residues 2390-2496 (FLKDDFILEV…ESLFPARVVY (107 aa)) are extracellular. Residues cysteine 2455 and cysteine 2461 are joined by a disulfide bond. A helical transmembrane segment spans residues 2497–2517 (DLLFFFIVIIIVLNLIFGVII). Topologically, residues 2518 to 2671 (DTFADLRSEK…FVDVQNCISR (154 aa)) are cytoplasmic. Positions 2538 and 2539 each coordinate ATP. Cysteine 2538 lines the Zn(2+) pocket. Cysteine 2541 and histidine 2558 together coordinate Zn(2+). ATP-binding residues include lysine 2560, histidine 2563, asparagine 2564, and methionine 2565. Position 2563 (histidine 2563) interacts with Zn(2+). Position 2581 (threonine 2581) interacts with Ca(2+). Residues serine 2609 and serine 2670 each carry the phosphoserine modification.

Belongs to the InsP3 receptor family. In terms of assembly, homotetramer. Homodimer. Interacts with TRPC1, TRPC3 and TRPC4. Interacts with TRPV4. Interacts with SIGMAR1. Interacts with PML and AKT1. Interacts with IRAG2 (via coiled-coil domain). Interacts with CABP1. Interacts with TMBIM4/LFG4. Interacts with CEMIP. Interacts with TESPA1. Interacts with TMEM203. Interacts with BOK; regulates ITPR3 expression. Interacts with BCL2L10. Interacts with CHGA and CHGB. Post-translationally, phosphorylated by AKT1 on serine and/or threonine residues. As to expression, expressed in intestinal crypt and villus epithelial cells.

The protein localises to the endoplasmic reticulum membrane. It is found in the cytoplasmic vesicle. It localises to the secretory vesicle membrane. It catalyses the reaction Ca(2+)(in) = Ca(2+)(out). Its activity is regulated as follows. Inositol 1,4,5-trisphosphate-gated calcium channel is regulated by cytosolic calcium in a biphasic manner. At low concentrations, cytosolic calcium binds at a high-affinity juxtamembrane domain (JD) calcium binding site, allowing ITPR3 to activate by escaping a low-energy resting state through an ensemble of preactivated states. At high cytosolic calcium concentrations, ITPR3 preferentially enters an inhibited state stabilized by calcium binding at a second, low-affinity cytoplasmic domain (CD) calcium binding site. Its function is as follows. Inositol 1,4,5-trisphosphate-gated calcium channel that, upon 1D-myo-inositol 1,4,5-trisphosphate binding, transports calcium from the endoplasmic reticulum lumen to cytoplasm, thus releasing the intracellular calcium and therefore participates in cellular calcium ion homeostasis. 1D-myo-inositol 1,4,5-trisphosphate binds to the ligand-free channel without altering its global conformation, yielding the low-energy resting state, then progresses through resting-to preactivated transitions to the higher energy preactivated state, which increases affinity for calcium, promoting binding of the low basal cytosolic calcium at the juxtamembrane domain (JD) site, favoring the transition through the ensemble of high-energy intermediate states along the trajectory to the fully-open activated state. Upon opening, releases calcium in the cytosol where it can bind to the low-affinity cytoplasmic domain (CD) site and stabilizes the inhibited state to terminate calcium release. The protein is Inositol 1,4,5-trisphosphate-gated calcium channel ITPR3 of Homo sapiens (Human).